The chain runs to 409 residues: Peptidase T (409 aa).

Residue His-78 participates in Zn(2+) binding. Asp-80 is a catalytic residue. Asp-140 contributes to the Zn(2+) binding site. Glu-173 acts as the Proton acceptor in catalysis. The Zn(2+) site is built by Glu-174, Asp-196, and His-379.

Belongs to the peptidase M20B family. Zn(2+) is required as a cofactor.

It is found in the cytoplasm. It carries out the reaction Release of the N-terminal residue from a tripeptide.. Cleaves the N-terminal amino acid of tripeptides. The polypeptide is Peptidase T (Escherichia coli O139:H28 (strain E24377A / ETEC)).